A 519-amino-acid polypeptide reads, in one-letter code: Exodeoxyribonuclease 7 large subunit (519 aa).

The tract at residues V500–L519 is disordered.

It belongs to the XseA family. As to quaternary structure, heterooligomer composed of large and small subunits.

The protein resides in the cytoplasm. It carries out the reaction Exonucleolytic cleavage in either 5'- to 3'- or 3'- to 5'-direction to yield nucleoside 5'-phosphates.. Functionally, bidirectionally degrades single-stranded DNA into large acid-insoluble oligonucleotides, which are then degraded further into small acid-soluble oligonucleotides. The protein is Exodeoxyribonuclease 7 large subunit of Cereibacter sphaeroides (strain ATCC 17029 / ATH 2.4.9) (Rhodobacter sphaeroides).